Reading from the N-terminus, the 129-residue chain is Iron-sulfur cluster assembly 1 homolog, mitochondrial (129 aa).

The N-terminal 12 residues, 1 to 12 (MSASLVRATVRA), are a transit peptide targeting the mitochondrion. The Fe cation site is built by Cys-57, Cys-121, and Cys-123.

It belongs to the HesB/IscA family. Interacts with CRY2, but not with CRY1 (in vitro).

Its subcellular location is the mitochondrion. Involved in the maturation of mitochondrial 4Fe-4S proteins functioning late in the iron-sulfur cluster assembly pathway. Probably involved in the binding of an intermediate of Fe/S cluster assembly. This chain is Iron-sulfur cluster assembly 1 homolog, mitochondrial (ISCA1), found in Bos taurus (Bovine).